A 157-amino-acid polypeptide reads, in one-letter code: Transcriptional repressor NrdR (157 aa).

A zinc finger spans residues C3 to C34. One can recognise an ATP-cone domain in the interval P49 to E139.

Belongs to the NrdR family. Requires Zn(2+) as cofactor.

Functionally, negatively regulates transcription of bacterial ribonucleotide reductase nrd genes and operons by binding to NrdR-boxes. The chain is Transcriptional repressor NrdR from Hamiltonella defensa subsp. Acyrthosiphon pisum (strain 5AT).